The chain runs to 509 residues: Subtelomeric hrmA-associated cluster protein AFUB_078990 (509 aa).

In terms of biological role, part of the subtelomeric hrmA-associated cluster (HAC) containing genes that alter the hyphal surface (such as reduced total chitin or increased beta-glucan exposure) and perturb inter-hyphal interactions within the developing biofilms, resulting in a loss of vertically aligned polarized growing filaments. Consequently, this hypoxia-typic morphotype (called H-MORPH) with altered biofilm architecture leads to increased hypoxia fitness, increased host inflammation, rapid disease progression, and mortality in a murine model of invasive aspergillosis. The sequence is that of Subtelomeric hrmA-associated cluster protein AFUB_078990 from Aspergillus fumigatus (strain CBS 144.89 / FGSC A1163 / CEA10) (Neosartorya fumigata).